A 260-amino-acid polypeptide reads, in one-letter code: Trans-aconitate 2-methyltransferase (260 aa).

Belongs to the methyltransferase superfamily. Tam family.

It localises to the cytoplasm. It catalyses the reaction trans-aconitate + S-adenosyl-L-methionine = (E)-3-(methoxycarbonyl)pent-2-enedioate + S-adenosyl-L-homocysteine. Functionally, catalyzes the S-adenosylmethionine monomethyl esterification of trans-aconitate. The chain is Trans-aconitate 2-methyltransferase from Paracidovorax citrulli (strain AAC00-1) (Acidovorax citrulli).